A 303-amino-acid polypeptide reads, in one-letter code: Recombination-associated protein RdgC (303 aa).

It belongs to the RdgC family.

Its subcellular location is the cytoplasm. The protein localises to the nucleoid. May be involved in recombination. This Shewanella halifaxensis (strain HAW-EB4) protein is Recombination-associated protein RdgC.